Reading from the N-terminus, the 579-residue chain is Arginine--tRNA ligase (579 aa).

The short motif at 127-137 (PNLAKEMHVGH) is the 'HIGH' region element.

It belongs to the class-I aminoacyl-tRNA synthetase family. In terms of assembly, monomer.

It localises to the cytoplasm. The enzyme catalyses tRNA(Arg) + L-arginine + ATP = L-arginyl-tRNA(Arg) + AMP + diphosphate. The chain is Arginine--tRNA ligase from Azotobacter vinelandii (strain DJ / ATCC BAA-1303).